Consider the following 71-residue polypeptide: MRKSFYSWLMTQRNPKSDEPVAILADLAFDDTTFPKHSDDFEVISRYLEDQAIFSFNLGHFDAIWEDYLNH.

It belongs to the UPF0346 family.

The sequence is that of UPF0346 protein SUB0487 from Streptococcus uberis (strain ATCC BAA-854 / 0140J).